Reading from the N-terminus, the 725-residue chain is Non-structural protein 4 (725 aa).

2 disordered regions span residues Met1–Asn26 and Asp666–Glu725. Over residues Thr7–Pro16 the composition is skewed to polar residues. Residues Glu675–Asp686 are compositionally biased toward basic and acidic residues. Positions Asp687–Asp709 are enriched in acidic residues.

The sequence is that of Non-structural protein 4 from Rice gall dwarf virus (RGDV).